The chain runs to 581 residues: Putative aluminum-activated malate transporter 3 (581 aa).

6 helical membrane passes run 98–118 (MGLA…GLEL), 122–142 (YLWA…ATFS), 148–164 (GLGT…MSWI), 167–187 (MTGN…AFFA), 201–218 (YGFR…VSGY), and 231–251 (FLLI…IYPI).

Belongs to the aromatic acid exporter (TC 2.A.85) family.

The protein localises to the membrane. Functionally, malate transporter. This is Putative aluminum-activated malate transporter 3 (ALMT3) from Arabidopsis thaliana (Mouse-ear cress).